The following is a 136-amino-acid chain: Small ribosomal subunit protein uS9 (136 aa).

Belongs to the universal ribosomal protein uS9 family.

The protein is Small ribosomal subunit protein uS9 of Borreliella afzelii (strain PKo) (Borrelia afzelii).